The primary structure comprises 734 residues: Photosystem I P700 chlorophyll a apoprotein A2 (734 aa).

A run of 8 helical transmembrane segments spans residues 46–69 (IFAS…FHVA), 135–158 (LYTG…LHLQ), 175–199 (LNHH…HVAI), 273–291 (IAHH…GHMY), 330–353 (LHFQ…QHMY), 369–395 (AALY…IFFI), 417–439 (AIIS…LYVH), and 517–535 (FLVH…SIPV). 2 residues coordinate [4Fe-4S] cluster: Cys-559 and Cys-568. The next 2 membrane-spanning stretches (helical) occupy residues 575-596 (AFYL…YWHW) and 643-665 (LSVW…MFLI). Chlorophyll a is bound by residues His-654, Met-662, and Tyr-670. Trp-671 provides a ligand contact to phylloquinone. A helical transmembrane segment spans residues 707–727 (LVGLAHFSVGYIFTYAAFLIA).

The protein belongs to the PsaA/PsaB family. In terms of assembly, the PsaA/B heterodimer binds the P700 chlorophyll special pair and subsequent electron acceptors. PSI consists of a core antenna complex that captures photons, and an electron transfer chain that converts photonic excitation into a charge separation. The eukaryotic PSI reaction center is composed of at least 11 subunits. It depends on P700 is a chlorophyll a/chlorophyll a' dimer, A0 is one or more chlorophyll a, A1 is one or both phylloquinones and FX is a shared 4Fe-4S iron-sulfur center. as a cofactor.

The protein localises to the plastid. The protein resides in the chloroplast thylakoid membrane. The catalysed reaction is reduced [plastocyanin] + hnu + oxidized [2Fe-2S]-[ferredoxin] = oxidized [plastocyanin] + reduced [2Fe-2S]-[ferredoxin]. In terms of biological role, psaA and PsaB bind P700, the primary electron donor of photosystem I (PSI), as well as the electron acceptors A0, A1 and FX. PSI is a plastocyanin-ferredoxin oxidoreductase, converting photonic excitation into a charge separation, which transfers an electron from the donor P700 chlorophyll pair to the spectroscopically characterized acceptors A0, A1, FX, FA and FB in turn. Oxidized P700 is reduced on the lumenal side of the thylakoid membrane by plastocyanin. The protein is Photosystem I P700 chlorophyll a apoprotein A2 of Angiopteris evecta (Mule's foot fern).